We begin with the raw amino-acid sequence, 241 residues long: Uridylate kinase (241 aa).

14–17 (KLSG) is an ATP binding site. An involved in allosteric activation by GTP region spans residues 22–27 (GGLGMG). Gly56 lines the UMP pocket. ATP is bound by residues Gly57 and Arg61. UMP-binding positions include Asp77 and 138 to 145 (TGNPFFTT). Thr165, Tyr171, and Asp174 together coordinate ATP.

It belongs to the UMP kinase family. In terms of assembly, homohexamer.

The protein localises to the cytoplasm. It carries out the reaction UMP + ATP = UDP + ADP. It functions in the pathway pyrimidine metabolism; CTP biosynthesis via de novo pathway; UDP from UMP (UMPK route): step 1/1. Its activity is regulated as follows. Allosterically activated by GTP. Inhibited by UTP. Catalyzes the reversible phosphorylation of UMP to UDP. The polypeptide is Uridylate kinase (Psychrobacter sp. (strain PRwf-1)).